The primary structure comprises 124 residues: uncharacterized protein (124 aa).

The first 19 residues, 1–19, serve as a signal peptide directing secretion; that stretch reads MRLLVQKVILIYLARYAKS. 2 helical membrane passes run 37 to 57 and 86 to 108; these read IAEF…GVKF and LGAL…IIII.

The protein localises to the membrane. This is an uncharacterized protein from Saccharomyces cerevisiae (strain ATCC 204508 / S288c) (Baker's yeast).